We begin with the raw amino-acid sequence, 208 residues long: Uracil phosphoribosyltransferase (208 aa).

Residues R78, R103, and 130–138 contribute to the 5-phospho-alpha-D-ribose 1-diphosphate site; that span reads DPMLATGGS. Uracil-binding positions include I193 and 198 to 200; that span reads GDA. 5-phospho-alpha-D-ribose 1-diphosphate is bound at residue D199.

Belongs to the UPRTase family. Requires Mg(2+) as cofactor.

It catalyses the reaction UMP + diphosphate = 5-phospho-alpha-D-ribose 1-diphosphate + uracil. Its pathway is pyrimidine metabolism; UMP biosynthesis via salvage pathway; UMP from uracil: step 1/1. With respect to regulation, allosterically activated by GTP. Its function is as follows. Catalyzes the conversion of uracil and 5-phospho-alpha-D-ribose 1-diphosphate (PRPP) to UMP and diphosphate. The sequence is that of Uracil phosphoribosyltransferase from Klebsiella pneumoniae subsp. pneumoniae (strain ATCC 700721 / MGH 78578).